Here is a 396-residue protein sequence, read N- to C-terminus: Ribosomal RNA large subunit methyltransferase I (396 aa).

The PUA domain maps to 2–81 (SVRLVLAKGR…ESIDIAFFSR (80 aa)).

This sequence belongs to the methyltransferase superfamily. RlmI family.

The protein resides in the cytoplasm. It catalyses the reaction cytidine(1962) in 23S rRNA + S-adenosyl-L-methionine = 5-methylcytidine(1962) in 23S rRNA + S-adenosyl-L-homocysteine + H(+). Its function is as follows. Specifically methylates the cytosine at position 1962 (m5C1962) of 23S rRNA. This Escherichia coli O157:H7 protein is Ribosomal RNA large subunit methyltransferase I.